A 539-amino-acid polypeptide reads, in one-letter code: Beta-agarase A (539 aa).

The signal sequence occupies residues 1-19; that stretch reads MKKNYLLLYFIFLLCGSIA. In terms of domain architecture, GH16 spans 21–289; it reads QDWNGIPVPA…WIRVYKPVAV (269 aa). Substrate contacts are provided by residues Trp-73, 82 to 92, 96 to 98, and Glu-144; these read NAPQAWTNGSQ and QAQ. Glu-147 serves as the catalytic Nucleophile. Glu-152 acts as the Proton donor in catalysis. Residues Arg-176 and Asp-271 each contribute to the substrate site. A disordered region spans residues 332–353; sequence WANTNDIGSRDRGASNGRNNIN.

It belongs to the glycosyl hydrolase 16 family. As to quaternary structure, monomer. In terms of processing, proteolytically cleaved into mature beta-agarase A catalytic chain (AgaAc).

The protein localises to the secreted. The enzyme catalyses Hydrolysis of (1-&gt;4)-beta-D-galactosidic linkages in agarose, giving the tetramer as the predominant product.. Its function is as follows. Cleaves the beta-1,4-linkages between beta-D-galactose and alpha-L-3,6-anhydro-galactose residues in agarose. Cleaves agarose in a random manner with retention of the anomeric-bond configuration, producing beta-anomers that give rise progressively to alpha-anomers when mutarotation takes place. This Zobellia galactanivorans (strain DSM 12802 / CCUG 47099 / CIP 106680 / NCIMB 13871 / Dsij) protein is Beta-agarase A (agaA).